The sequence spans 266 residues: Undecaprenyl-diphosphatase (266 aa).

Transmembrane regions (helical) follow at residues 1-21, 39-59, 87-107, 115-135, 144-164, 183-203, 218-238, and 246-266; these read MDTF…FLPI, QGLS…VMYF, WWII…KDFI, AVIA…DRMF, VGWK…IPGT, AAAR…AILV, ALSL…HLFL, and MTPF…FMFA.

This sequence belongs to the UppP family.

It is found in the cell inner membrane. The catalysed reaction is di-trans,octa-cis-undecaprenyl diphosphate + H2O = di-trans,octa-cis-undecaprenyl phosphate + phosphate + H(+). Functionally, catalyzes the dephosphorylation of undecaprenyl diphosphate (UPP). Confers resistance to bacitracin. The polypeptide is Undecaprenyl-diphosphatase (Shewanella sediminis (strain HAW-EB3)).